The primary structure comprises 229 residues: GTP cyclohydrolase 1 (229 aa).

The interval 1 to 26 (MDAKIKPIRGTNPAEGRPEFQPAELE) is disordered. The Zn(2+) site is built by Cys-118, His-121, and Cys-189.

This sequence belongs to the GTP cyclohydrolase I family. Toroid-shaped homodecamer, composed of two pentamers of five dimers.

The enzyme catalyses GTP + H2O = 7,8-dihydroneopterin 3'-triphosphate + formate + H(+). It functions in the pathway cofactor biosynthesis; 7,8-dihydroneopterin triphosphate biosynthesis; 7,8-dihydroneopterin triphosphate from GTP: step 1/1. This Rhodopseudomonas palustris (strain ATCC BAA-98 / CGA009) protein is GTP cyclohydrolase 1.